The chain runs to 753 residues: Dolichyl-phosphate-mannose--protein mannosyltransferase 3 (753 aa).

Residues 1–50 are Cytoplasmic-facing; that stretch reads MPYRVATGYSEKSTDDDLIWRTPIVKEELEDADNFLKDDAELYDKVKNES. Residues 51 to 71 form a helical membrane-spanning segment; it reads AVSHLDTIVMPIIFTVLGMFT. Residues 72-148 are Lumenal-facing; that stretch reads RMYKIGRNNH…IDYVKMRLFQ (77 aa). N-linked (GlcNAc...) asparagine glycosylation is present at Asn-124. A helical membrane pass occupies residues 149-169; that stretch reads AMFSSLCVPLAYFTGRAIGFS. Over 170–174 the chain is Cytoplasmic; the sequence is RLSVW. Residues 175–195 traverse the membrane as a helical segment; it reads LFTILVIFENSYATLGKFILL. Residues 196–235 are Lumenal-facing; the sequence is DSMLLFFTVSSYFCLAKFHTMRKSPFSARWWLWLCLTGLN. A helical transmembrane segment spans residues 236–256; the sequence is LGCAISVKMVGLFIISVVGIY. The Cytoplasmic segment spans residues 257–282; that stretch reads TISELWNLLSDRSVSWKVYVNHWLAR. Residues 283 to 303 form a helical membrane-spanning segment; it reads IFGLIIIPVCVFLLCFKIHFD. Residues 304–602 are Lumenal-facing; sequence LLSNSGPGDS…IKYFLLGSPA (299 aa). A glycan (N-linked (GlcNAc...) asparagine) is linked at Asn-324. The region spanning 332–387 is the MIR 1 domain; the sequence is PRDVALGSSIISIKNQALGGALLHSHVQPFPEGSEQQQVTVYGYSDANNEWFFQRI. Asn-398 carries an N-linked (GlcNAc...) asparagine glycan. 2 consecutive MIR domains span residues 401–457 and 465–523; these read IEFV…IEIV and PTLL…IETH. The chain crosses the membrane as a helical span at residues 603–623; sequence SVWPSSIAVCALIIHVIFLTL. Topologically, residues 624–639 are cytoplasmic; the sequence is KWQRQCVILSDPVERD. A helical transmembrane segment spans residues 640–660; the sequence is VFVMAAFYPLLAWLLHYMPFV. The Lumenal segment spans residues 661 to 665; the sequence is VMSRV. Residues 666–686 form a helical membrane-spanning segment; sequence VYAHHYLPTLYFALMILSYYF. Residues 687–703 are Cytoplasmic-facing; sequence DMITKRWATRNTGKFLR. A helical transmembrane segment spans residues 704 to 724; the sequence is LGAYIVYGSIVIAGFFYFSPF. The Lumenal portion of the chain corresponds to 725–753; that stretch reads SFGMDGPVDDYAYLAWLPTWQIVEDIRNT.

It belongs to the glycosyltransferase 39 family. As to quaternary structure, PMT3 and PMT5 form a functional heterodimer. Also forms a minor complex with PMT1.

It is found in the endoplasmic reticulum membrane. The enzyme catalyses a di-trans,poly-cis-dolichyl beta-D-mannosyl phosphate + L-seryl-[protein] = 3-O-(alpha-D-mannosyl)-L-seryl-[protein] + a di-trans,poly-cis-dolichyl phosphate + H(+). It catalyses the reaction a di-trans,poly-cis-dolichyl beta-D-mannosyl phosphate + L-threonyl-[protein] = 3-O-(alpha-D-mannosyl)-L-threonyl-[protein] + a di-trans,poly-cis-dolichyl phosphate + H(+). The protein operates within protein modification; protein glycosylation. Its function is as follows. Protein O-mannosyltransferase involved in O-glycosylation which is essential for cell wall rigidity. Forms a heterodimeric complex with PMT5 and more rarely with PMT1 to transfer mannose from Dol-P-mannose to Ser or Thr residues on proteins. Seems to have redundant activity to PMT2. The protein is Dolichyl-phosphate-mannose--protein mannosyltransferase 3 of Saccharomyces cerevisiae (strain ATCC 204508 / S288c) (Baker's yeast).